Here is a 147-residue protein sequence, read N- to C-terminus: Deoxyuridine 5'-triphosphate nucleotidohydrolase (147 aa).

Arginine 24 is a Mg(2+) binding site. DUTP contacts are provided by residues 68-70 (PRS), 82-85 (GVID), tyrosine 88, glycine 93, isoleucine 95, and arginine 111.

This sequence belongs to the dUTPase family.

The enzyme catalyses dUTP + H2O = dUMP + diphosphate + H(+). Its function is as follows. This enzyme is involved in nucleotide metabolism: it produces dUMP, the immediate precursor of thymidine nucleotides and it decreases the intracellular concentration of dUTP so that uracil cannot be incorporated into DNA. This Homo sapiens (Human) protein is Deoxyuridine 5'-triphosphate nucleotidohydrolase (OPG046).